The following is a 369-amino-acid chain: Glutamate 5-kinase (369 aa).

An ATP-binding site is contributed by lysine 9. Residues serine 49, aspartate 136, and asparagine 148 each contribute to the substrate site. ATP-binding positions include 168–169 (TD) and 210–216 (TGGMLTK). The PUA domain maps to 275-355 (QGEIYVDQGA…KGVVIHRDDW (81 aa)).

This sequence belongs to the glutamate 5-kinase family.

It localises to the cytoplasm. The catalysed reaction is L-glutamate + ATP = L-glutamyl 5-phosphate + ADP. It functions in the pathway amino-acid biosynthesis; L-proline biosynthesis; L-glutamate 5-semialdehyde from L-glutamate: step 1/2. Functionally, catalyzes the transfer of a phosphate group to glutamate to form L-glutamate 5-phosphate. The protein is Glutamate 5-kinase of Streptococcus sanguinis (strain SK36).